A 179-amino-acid chain; its full sequence is Shikimate kinase (179 aa).

15 to 20 (GAGKTS) contacts ATP. T19 is a Mg(2+) binding site. Positions 37, 61, and 83 each coordinate substrate. Residue R122 coordinates ATP. R142 contributes to the substrate binding site.

This sequence belongs to the shikimate kinase family. Monomer. Requires Mg(2+) as cofactor.

It localises to the cytoplasm. It catalyses the reaction shikimate + ATP = 3-phosphoshikimate + ADP + H(+). It participates in metabolic intermediate biosynthesis; chorismate biosynthesis; chorismate from D-erythrose 4-phosphate and phosphoenolpyruvate: step 5/7. Catalyzes the specific phosphorylation of the 3-hydroxyl group of shikimic acid using ATP as a cosubstrate. This chain is Shikimate kinase, found in Coxiella burnetii (strain Dugway 5J108-111).